The chain runs to 579 residues: XK-related protein 7 (579 aa).

The segment covering 1 to 18 (MAAKSDGAAASAGPDPEG) has biased composition (low complexity). Positions 1-40 (MAAKSDGAAASAGPDPEGAAGGARGSAGGRGEAAAAAGPP) are disordered. Positions 19–31 (AAGGARGSAGGRG) are enriched in gly residues. Transmembrane regions (helical) follow at residues 59-79 (WVLC…WLAA) and 89-109 (YFSL…LLSF). Positions 146 to 165 (GAFRTKEGSPEPGPQPAPSS) are disordered. The next 5 membrane-spanning stretches (helical) occupy residues 260–280 (LLPA…LASY), 314–334 (GLAF…CIVG), 355–375 (GEEI…WFNV), 384–404 (MTLY…FWYS), and 415–435 (LIMV…MCVY). The tract at residues 466 to 510 (ADAITSPPRSLPRTTGAERDGASAGERAGTPTPPVFQVRPGLPPT) is disordered.

Belongs to the XK family.

The protein resides in the cell membrane. This Pan troglodytes (Chimpanzee) protein is XK-related protein 7 (XKR7).